A 431-amino-acid polypeptide reads, in one-letter code: Histidine--tRNA ligase (431 aa).

Belongs to the class-II aminoacyl-tRNA synthetase family. In terms of assembly, homodimer.

The protein resides in the cytoplasm. It catalyses the reaction tRNA(His) + L-histidine + ATP = L-histidyl-tRNA(His) + AMP + diphosphate + H(+). This Finegoldia magna (strain ATCC 29328 / DSM 20472 / WAL 2508) (Peptostreptococcus magnus) protein is Histidine--tRNA ligase.